The primary structure comprises 143 residues: 3-hydroxyacyl-[acyl-carrier-protein] dehydratase FabZ (143 aa).

The active site involves His49.

Belongs to the thioester dehydratase family. FabZ subfamily.

The protein localises to the cytoplasm. It catalyses the reaction a (3R)-hydroxyacyl-[ACP] = a (2E)-enoyl-[ACP] + H2O. In terms of biological role, involved in unsaturated fatty acids biosynthesis. Catalyzes the dehydration of short chain beta-hydroxyacyl-ACPs and long chain saturated and unsaturated beta-hydroxyacyl-ACPs. The protein is 3-hydroxyacyl-[acyl-carrier-protein] dehydratase FabZ of Ehrlichia chaffeensis (strain ATCC CRL-10679 / Arkansas).